A 352-amino-acid polypeptide reads, in one-letter code: Membrane progestin receptor alpha (352 aa).

Residues 1-75 (MATVVMEQIG…FLTLFQRHNE (75 aa)) lie on the Cytoplasmic side of the membrane. A helical membrane pass occupies residues 76-96 (TLNVWTHLLAAFIILVKWQEI). At 97-110 (SETVDFLRDPHAQP) the chain is on the extracellular side. Residues 111–131 (LFIVLLAAFTYLSFSALAHLL) form a helical membrane-spanning segment. Residues 132–139 (SAKSELSY) lie on the Cytoplasmic side of the membrane. The chain crosses the membrane as a helical span at residues 140–160 (YTFYFLDYVGVAVYQYGSALA). The Extracellular portion of the chain corresponds to 161 to 175 (HYYYAIEKEWHTKVQ). A helical transmembrane segment spans residues 176–196 (GLFLPAAAFLAWLTCFGCCYG). Topologically, residues 197–242 (KYASPELPKVANKLFQVVPSALAYCLDISPVVHRIYSCYQEGCSDP) are cytoplasmic. A helical membrane pass occupies residues 243–263 (VVAYHFYHVVFFLIGAYFFCC). At 264–275 (PHPESLFPGKCD) the chain is on the extracellular side. The helical transmembrane segment at 276–296 (FIGQGHQLFHVFVVVCTLTQV) threads the bilayer. The Cytoplasmic portion of the chain corresponds to 297–316 (EALRTDFTERRPFYERLHGD). The helical transmembrane segment at 317–337 (LAHDAVALFIFTACCSALTAF) threads the bilayer. At 338-352 (YVRQRVRASLHEKGE) the chain is on the extracellular side.

It belongs to the ADIPOR family. Strongly expressed in ovary and brain; lower expression in testis and pituitary. Not detected in heart, kidney, spleen, intestine, gill and muscle.

The protein localises to the cell membrane. Functionally, steroid membrane receptor. Binds progesterone, progestin and 17-hydroxyprogesterone in vitro. Capable of mediating progestin-induced oocyte maturation. This chain is Membrane progestin receptor alpha (mpra), found in Cynoscion nebulosus (Spotted seatrout).